Consider the following 623-residue polypeptide: Bifunctional enzyme CysN/CysC (623 aa).

Residues 1–450 (MQSVIAYLKQ…HVARARIKGQ (450 aa)) form a sulfate adenylyltransferase region. Positions 14–228 (KPLLRFITCG…YLEALEPADV (215 aa)) constitute a tr-type G domain. The tract at residues 23–30 (GSVDDGKS) is G1. Position 23–30 (23–30 (GSVDDGKS)) interacts with GTP. The G2 stretch occupies residues 81–85 (GITID). A G3 region spans residues 102 to 105 (DCPG). GTP-binding positions include 102–106 (DCPGH) and 157–160 (NKMD). The segment at 157 to 160 (NKMD) is G4. The tract at residues 194–196 (SAL) is G5. Positions 451–623 (TPKVLWFTGL…VLSLLGVEGK (173 aa)) are adenylyl-sulfate kinase. 459–466 (GLSGAGKS) contributes to the ATP binding site. Ser533 functions as the Phosphoserine intermediate in the catalytic mechanism.

The protein in the C-terminal section; belongs to the APS kinase family. It in the N-terminal section; belongs to the TRAFAC class translation factor GTPase superfamily. Classic translation factor GTPase family. CysN/NodQ subfamily. As to quaternary structure, heterodimer composed of CysD, the smaller subunit, and CysNC.

It carries out the reaction sulfate + ATP + H(+) = adenosine 5'-phosphosulfate + diphosphate. It catalyses the reaction adenosine 5'-phosphosulfate + ATP = 3'-phosphoadenylyl sulfate + ADP + H(+). It participates in sulfur metabolism; hydrogen sulfide biosynthesis; sulfite from sulfate: step 1/3. The protein operates within sulfur metabolism; hydrogen sulfide biosynthesis; sulfite from sulfate: step 2/3. Functionally, with CysD forms the ATP sulfurylase (ATPS) that catalyzes the adenylation of sulfate producing adenosine 5'-phosphosulfate (APS) and diphosphate, the first enzymatic step in sulfur assimilation pathway. APS synthesis involves the formation of a high-energy phosphoric-sulfuric acid anhydride bond driven by GTP hydrolysis by CysN coupled to ATP hydrolysis by CysD. In terms of biological role, APS kinase catalyzes the synthesis of activated sulfate. This is Bifunctional enzyme CysN/CysC (cysNC) from Xylella fastidiosa (strain Temecula1 / ATCC 700964).